Reading from the N-terminus, the 234-residue chain is MPALPWLDENLWFPHPDSALKDPNGLLCVGGDLHPARLRLAYENGIFPWFSEDQPILWWSPDPRCIIRHEDLHISRSMRRFLRNSGLTYSFDQHFTLVVQACAAPRSYSNETWITRDMLQAYSDLHQIGVAHSIEVWRESELVGGLYGLAIGRCFFGESMFSKETNASKAAFITLVRQLHAWGYRLIDCQVPNPHLLSLGACQISRKEFLSILEIEVRADFSHPWKMTIDPTGY.

This sequence belongs to the L/F-transferase family.

Its subcellular location is the cytoplasm. The catalysed reaction is N-terminal L-lysyl-[protein] + L-leucyl-tRNA(Leu) = N-terminal L-leucyl-L-lysyl-[protein] + tRNA(Leu) + H(+). The enzyme catalyses N-terminal L-arginyl-[protein] + L-leucyl-tRNA(Leu) = N-terminal L-leucyl-L-arginyl-[protein] + tRNA(Leu) + H(+). It catalyses the reaction L-phenylalanyl-tRNA(Phe) + an N-terminal L-alpha-aminoacyl-[protein] = an N-terminal L-phenylalanyl-L-alpha-aminoacyl-[protein] + tRNA(Phe). In terms of biological role, functions in the N-end rule pathway of protein degradation where it conjugates Leu, Phe and, less efficiently, Met from aminoacyl-tRNAs to the N-termini of proteins containing an N-terminal arginine or lysine. The protein is Leucyl/phenylalanyl-tRNA--protein transferase of Hahella chejuensis (strain KCTC 2396).